The sequence spans 546 residues: CTP synthase (546 aa).

The segment at 1-266 (MTTRYIFVTG…DELVVKRFSL (266 aa)) is amidoligase domain. Ser14 contributes to the CTP binding site. Ser14 is a UTP binding site. Residues 15-20 (SLGKGI) and Asp72 each bind ATP. 2 residues coordinate Mg(2+): Asp72 and Glu140. CTP is bound by residues 147–149 (DIE), 187–192 (KTKPTQ), and Lys223. UTP-binding positions include 187-192 (KTKPTQ) and Lys223. Residue 239–241 (KDV) participates in ATP binding. The 252-residue stretch at 291–542 (VIGMVGKYIE…VAAASAHQKR (252 aa)) folds into the Glutamine amidotransferase type-1 domain. Position 352 (Gly352) interacts with L-glutamine. The Nucleophile; for glutamine hydrolysis role is filled by Cys379. Residues 380 to 383 (LGMQ), Glu403, and Arg470 each bind L-glutamine. Active-site residues include His515 and Glu517.

The protein belongs to the CTP synthase family. Homotetramer.

The catalysed reaction is UTP + L-glutamine + ATP + H2O = CTP + L-glutamate + ADP + phosphate + 2 H(+). The enzyme catalyses L-glutamine + H2O = L-glutamate + NH4(+). It catalyses the reaction UTP + NH4(+) + ATP = CTP + ADP + phosphate + 2 H(+). The protein operates within pyrimidine metabolism; CTP biosynthesis via de novo pathway; CTP from UDP: step 2/2. Allosterically activated by GTP, when glutamine is the substrate; GTP has no effect on the reaction when ammonia is the substrate. The allosteric effector GTP functions by stabilizing the protein conformation that binds the tetrahedral intermediate(s) formed during glutamine hydrolysis. Inhibited by the product CTP, via allosteric rather than competitive inhibition. In terms of biological role, catalyzes the ATP-dependent amination of UTP to CTP with either L-glutamine or ammonia as the source of nitrogen. Regulates intracellular CTP levels through interactions with the four ribonucleotide triphosphates. The protein is CTP synthase of Shewanella oneidensis (strain ATCC 700550 / JCM 31522 / CIP 106686 / LMG 19005 / NCIMB 14063 / MR-1).